Here is a 119-residue protein sequence, read N- to C-terminus: Large ribosomal subunit protein bL20 (119 aa).

Belongs to the bacterial ribosomal protein bL20 family.

Its function is as follows. Binds directly to 23S ribosomal RNA and is necessary for the in vitro assembly process of the 50S ribosomal subunit. It is not involved in the protein synthesizing functions of that subunit. The protein is Large ribosomal subunit protein bL20 of Acinetobacter baylyi (strain ATCC 33305 / BD413 / ADP1).